The sequence spans 255 residues: Small ribosomal subunit protein eS1 (255 aa).

Alanine 2 is modified (N-acetylalanine; partial).

It belongs to the eukaryotic ribosomal protein eS1 family. In terms of assembly, component of the small ribosomal subunit. Mature ribosomes consist of a small (40S) and a large (60S) subunit. The 40S subunit contains about 33 different proteins and 1 molecule of RNA (18S). The 60S subunit contains about 49 different proteins and 3 molecules of RNA (25S, 5.8S and 5S).

Its subcellular location is the cytoplasm. The protein is Small ribosomal subunit protein eS1 of Kluyveromyces lactis (strain ATCC 8585 / CBS 2359 / DSM 70799 / NBRC 1267 / NRRL Y-1140 / WM37) (Yeast).